A 203-amino-acid chain; its full sequence is Holliday junction branch migration complex subunit RuvA (203 aa).

The segment at 1–64 (MIGRLRGIIL…EDAQLLYGFN (64 aa)) is domain I. The interval 65–142 (NKQERMLFRE…KGLHGDLFTP (78 aa)) is domain II. The tract at residues 143 to 154 (AADLVLTSPNGP) is flexible linker. The interval 155 to 203 (TSDDAEQEAVAALVALGYKPQEASRMVSKIAKPDANSETLIREALRAAL) is domain III.

Belongs to the RuvA family. As to quaternary structure, homotetramer. Forms an RuvA(8)-RuvB(12)-Holliday junction (HJ) complex. HJ DNA is sandwiched between 2 RuvA tetramers; dsDNA enters through RuvA and exits via RuvB. An RuvB hexamer assembles on each DNA strand where it exits the tetramer. Each RuvB hexamer is contacted by two RuvA subunits (via domain III) on 2 adjacent RuvB subunits; this complex drives branch migration. In the full resolvosome a probable DNA-RuvA(4)-RuvB(12)-RuvC(2) complex forms which resolves the HJ.

It is found in the cytoplasm. Its function is as follows. The RuvA-RuvB-RuvC complex processes Holliday junction (HJ) DNA during genetic recombination and DNA repair, while the RuvA-RuvB complex plays an important role in the rescue of blocked DNA replication forks via replication fork reversal (RFR). RuvA specifically binds to HJ cruciform DNA, conferring on it an open structure. The RuvB hexamer acts as an ATP-dependent pump, pulling dsDNA into and through the RuvAB complex. HJ branch migration allows RuvC to scan DNA until it finds its consensus sequence, where it cleaves and resolves the cruciform DNA. This Enterobacter sp. (strain 638) protein is Holliday junction branch migration complex subunit RuvA.